Consider the following 96-residue polypeptide: Aspartyl/glutamyl-tRNA(Asn/Gln) amidotransferase subunit C (96 aa).

It belongs to the GatC family. Heterotrimer of A, B and C subunits.

It catalyses the reaction L-glutamyl-tRNA(Gln) + L-glutamine + ATP + H2O = L-glutaminyl-tRNA(Gln) + L-glutamate + ADP + phosphate + H(+). The enzyme catalyses L-aspartyl-tRNA(Asn) + L-glutamine + ATP + H2O = L-asparaginyl-tRNA(Asn) + L-glutamate + ADP + phosphate + 2 H(+). Its function is as follows. Allows the formation of correctly charged Asn-tRNA(Asn) or Gln-tRNA(Gln) through the transamidation of misacylated Asp-tRNA(Asn) or Glu-tRNA(Gln) in organisms which lack either or both of asparaginyl-tRNA or glutaminyl-tRNA synthetases. The reaction takes place in the presence of glutamine and ATP through an activated phospho-Asp-tRNA(Asn) or phospho-Glu-tRNA(Gln). The protein is Aspartyl/glutamyl-tRNA(Asn/Gln) amidotransferase subunit C of Leptospira borgpetersenii serovar Hardjo-bovis (strain JB197).